Consider the following 238-residue polypeptide: Valine-rich protein (238 aa).

The first 16 residues, 1 to 16 (MQAVLLVVALFGAALA), serve as a signal peptide directing secretion.

In terms of tissue distribution, prismatic layer of shell (at protein level). Expressed primarily in the mantle with highest level in the mantle edge and lower level in the mantle pallium.

The protein localises to the secreted. In Margaritifera margaritifera (Freshwater pearl mussel), this protein is Valine-rich protein.